The primary structure comprises 229 residues: 2,3-bisphosphoglycerate-dependent phosphoglycerate mutase (229 aa).

Substrate-binding positions include 7-14 (RHGQSEWN), 20-21 (TG), arginine 59, 86-89 (ERHY), lysine 97, 113-114 (RR), and 182-183 (GN). Histidine 8 (tele-phosphohistidine intermediate) is an active-site residue. The Proton donor/acceptor role is filled by glutamate 86.

It belongs to the phosphoglycerate mutase family. BPG-dependent PGAM subfamily.

It catalyses the reaction (2R)-2-phosphoglycerate = (2R)-3-phosphoglycerate. It participates in carbohydrate degradation; glycolysis; pyruvate from D-glyceraldehyde 3-phosphate: step 3/5. In terms of biological role, catalyzes the interconversion of 2-phosphoglycerate and 3-phosphoglycerate. The protein is 2,3-bisphosphoglycerate-dependent phosphoglycerate mutase of Listeria monocytogenes serovar 1/2a (strain ATCC BAA-679 / EGD-e).